The following is a 498-amino-acid chain: Glycerol kinase (498 aa).

Thr12 lines the ADP pocket. ATP-binding residues include Thr12, Thr13, and Ser14. Sn-glycerol 3-phosphate is bound at residue Thr12. ADP is bound at residue Arg16. Residues Arg82, Glu83, and Tyr134 each coordinate sn-glycerol 3-phosphate. Positions 82, 83, and 134 each coordinate glycerol. His230 carries the phosphohistidine; by HPr modification. Residue Asp244 participates in sn-glycerol 3-phosphate binding. Glycerol is bound by residues Asp244 and Gln245. ADP-binding residues include Thr266 and Gly309. Thr266, Gly309, Gln313, and Gly410 together coordinate ATP. Residues Gly410 and Asn414 each coordinate ADP.

The protein belongs to the FGGY kinase family. In terms of assembly, homotetramer and homodimer (in equilibrium). In terms of processing, the phosphoenolpyruvate-dependent sugar phosphotransferase system (PTS), including enzyme I, and histidine-containing protein (HPr) are required for the phosphorylation, which leads to the activation of the enzyme.

It catalyses the reaction glycerol + ATP = sn-glycerol 3-phosphate + ADP + H(+). It participates in polyol metabolism; glycerol degradation via glycerol kinase pathway; sn-glycerol 3-phosphate from glycerol: step 1/1. With respect to regulation, activated by phosphorylation and inhibited by fructose 1,6-bisphosphate (FBP). Functionally, key enzyme in the regulation of glycerol uptake and metabolism. Catalyzes the phosphorylation of glycerol to yield sn-glycerol 3-phosphate. The sequence is that of Glycerol kinase from Staphylococcus aureus (strain MSSA476).